Reading from the N-terminus, the 610-residue chain is Glutamine--fructose-6-phosphate aminotransferase [isomerizing] (610 aa).

Cys2 (nucleophile; for GATase activity) is an active-site residue. One can recognise a Glutamine amidotransferase type-2 domain in the interval 2 to 220 (CGIISAISKK…EGDIAILSHK (219 aa)). SIS domains lie at 289–429 (AHAL…LKTN) and 461–600 (LAKE…IDKP). The active-site For Fru-6P isomerization activity is the Lys605.

Homodimer.

The protein localises to the cytoplasm. It catalyses the reaction D-fructose 6-phosphate + L-glutamine = D-glucosamine 6-phosphate + L-glutamate. Functionally, catalyzes the first step in hexosamine metabolism, converting fructose-6P into glucosamine-6P using glutamine as a nitrogen source. This Buchnera aphidicola subsp. Baizongia pistaciae (strain Bp) protein is Glutamine--fructose-6-phosphate aminotransferase [isomerizing].